Consider the following 281-residue polypeptide: Hexaprenyl pyrophosphate synthase (281 aa).

Residues lysine 42, arginine 45, and histidine 74 each contribute to the isopentenyl diphosphate site. Mg(2+) contacts are provided by aspartate 81 and aspartate 85. Arginine 91 lines the isopentenyl diphosphate pocket.

The protein belongs to the FPP/GGPP synthase family. Homodimer. Mg(2+) is required as a cofactor.

It catalyses the reaction 2 isopentenyl diphosphate + (2E,6E,10E)-geranylgeranyl diphosphate = all-trans-hexaprenyl diphosphate + 2 diphosphate. Its function is as follows. Catalyzes consecutive E-type condensation of two isopentenyl pyrophosphate (IPP) molecules with an allylic substrate such as geranylgeranyl diphosphate (GGPP), farnesyl diphosphate (FPP) or geranyl diphosphate (GPP) to yield the medium-chain product trans-C30-hexaprenyl pyrophosphate (HexPP). GGPP is the physiological substrate. The sequence is that of Hexaprenyl pyrophosphate synthase (gdS-2) from Saccharolobus solfataricus (strain ATCC 35092 / DSM 1617 / JCM 11322 / P2) (Sulfolobus solfataricus).